Consider the following 2351-residue polypeptide: MQIELSTCFFLCLLRFCFSATRRYYLGAVELSWDYMQSDLGELPVDARFPPRVPKSFPFNTSVVYKKTLFVEFTDHLFNIAKPRPPWMGLLGPTIQAEVYDTVVITLKNMASHPVSLHAVGVSYWKASEGAEYDDQTSQREKEDDKVFPGGSHTYVWQVLKENGPMASDPLCLTYSYLSHVDLVKDLNSGLIGALLVCREGSLAKEKTQTLHKFILLFAVFDEGKSWHSETKNSLMQDRDAASARAWPKMHTVNGYVNRSLPGLIGCHRKSVYWHVIGMGTTPEVHSIFLEGHTFLVRNHRQASLEISPITFLTAQTLLMDLGQFLLFCHISSHQHDGMEAYVKVDSCPEEPQLRMKNNEEAEDYDDDLTDSEMDVVRFDDDNSPSFIQIRSVAKKHPKTWVHYIAAEEEDWDYAPLVLAPDDRSYKSQYLNNGPQRIGRKYKKVRFMAYTDETFKTREAIQHESGILGPLLYGEVGDTLLIIFKNQASRPYNIYPHGITDVRPLYSRRLPKGVKHLKDFPILPGEIFKYKWTVTVEDGPTKSDPRCLTRYYSSFVNMERDLASGLIGPLLICYKESVDQRGNQIMSDKRNVILFSVFDENRSWYLTENIQRFLPNPAGVQLEDPEFQASNIMHSINGYVFDSLQLSVCLHEVAYWYILSIGAQTDFLSVFFSGYTFKHKMVYEDTLTLFPFSGETVFMSMENPGLWILGCHNSDFRNRGMTALLKVSSCDKNTGDYYEDSYEDISAYLLSKNNAIEPRSFSQNSRHPSTRQKQFNATTIPENDIEKTDPWFAHRTPMPKIQNVSSSDLLMLLRQSPTPHGLSLSDLQEAKYETFSDDPSPGAIDSNNSLSEMTHFRPQLHHSGDMVFTPESGLQLRLNEKLGTTAATELKKLDFKVSSTSNNLISTIPSDNLAAGTDNTSSLGPPSMPVHYDSQLDTTLFGKKSSPLTESGGPLSLSEENNDSKLLESGLMNSQESSWGKNVSSTESGRLFKGKRAHGPALLTKDNALFKVSISLLKTNKTSNNSATNRKTHIDGPSLLIENSPSVWQNILESDTEFKKVTPLIHDRMLMDKNATALRLNHMSNKTTSSKNMEMVQQKKEGPIPPDAQNPDMSFFKMLFLPESARWIQRTHGKNSLNSGQGPSPKQLVSLGPEKSVEGQNFLSEKNKVVVGKGEFTKDVGLKEMVFPSSRNLFLTNLDNLHENNTHNQEKKIQEEIEKKETLIQENVVLPQIHTVTGTKNFMKNLFLLSTRQNVEGSYDGAYAPVLQDFRSLNDSTNRTKKHTAHFSKKGEEENLEGLGNQTKQIVEKYACTTRISPNTSQQNFVTQRSKRALKQFRLPLEETELEKRIIVDDTSTQWSKNMKHLTPSTLTQIDYNEKEKGAITQSPLSDCLTRSHSIPQANRSPLPIAKVSSFPSIRPIYLTRVLFQDNSSHLPAASYRKKDSGVQESSHFLQGAKKNNLSLAILTLEMTGDQREVGSLGTSATNSVTYKKVENTVLPKPDLPKTSGKVELLPKVHIYQKDLFPTETSNGSPGHLDLVEGSLLQGTEGAIKWNEANRPGKVPFLRVATESSAKTPSKLLDPLAWDNHYGTQIPKEEWKSQEKSPEKTAFKKKDTILSLNACESNHAIAAINEGQNKPEIEVTWAKQGRTERLCSQNPPVLKRHQREITRTTLQSDQEEIDYDDTISVEMKKEDFDIYDEDENQSPRSFQKKTRHYFIAAVERLWDYGMSSSPHVLRNRAQSGSVPQFKKVVFQEFTDGSFTQPLYRGELNEHLGLLGPYIRAEVEDNIMVTFRNQASRPYSFYSSLISYEEDQRQGAEPRKNFVKPNETKTYFWKVQHHMAPTKDEFDCKAWAYFSDVDLEKDVHSGLIGPLLVCHTNTLNPAHGRQVTVQEFALFFTIFDETKSWYFTENMERNCRAPCNIQMEDPTFKENYRFHAINGYIMDTLPGLVMAQDQRIRWYLLSMGSNENIHSIHFSGHVFTVRKKEEYKMALYNLYPGVFETVEMLPSKAGIWRVECLIGEHLHAGMSTLFLVYSNKCQTPLGMASGHIRDFQITASGQYGQWAPKLARLHYSGSINAWSTKEPFSWIKVDLLAPMIIHGIKTQGARQKFSSLYISQFIIMYSLDGKKWQTYRGNSTGTLMVFFGNVDSSGIKHNIFNPPIIARYIRLHPTHYSIRSTLRMELMGCDLNSCSMPLGMESKAISDAQITASSYFTNMFATWSPSKARLHLQGRSNAWRPQVNNPKEWLQVDFQKTMKVTGVTTQGVKSLLTSMYVKEFLISSSQDGHQWTLFFQNGKVKVFQGNQDSFTPVVNSLDPPLLTRYLRIHPQSWVHQIALRMEVLGCEAQDLY.

Residues 1–19 (MQIELSTCFFLCLLRFCFS) form the signal peptide. Plastocyanin-like domains lie at 20–198 (ATRR…LLVC) and 206–348 (EKTQ…VDSC). In terms of domain architecture, F5/8 type A 1 spans 20–348 (ATRRYYLGAV…MEAYVKVDSC (329 aa)). A glycan (N-linked (GlcNAc...) asparagine) is linked at N60. The cysteines at positions 172 and 198 are disulfide-linked. N-linked (GlcNAc...) asparagine glycosylation occurs at N258. C267 and C348 are joined by a disulfide. A Sulfotyrosine modification is found at Y365. Plastocyanin-like domains are found at residues 399-573 (KTWV…LLIC) and 583-730 (NQIM…VSSC). The F5/8 type A 2 domain occupies 399-730 (KTWVHYIAAE…MTALLKVSSC (332 aa)). Cysteines 547 and 573 form a disulfide. N601 is a glycosylation site (N-linked (GlcNAc...) asparagine). Cysteines 649 and 730 form a disulfide. 3 positions are modified to sulfotyrosine: Y737, Y738, and Y742. The segment at 760 to 1667 (SFSQNSRHPS…NPPVLKRHQR (908 aa)) is b. N-linked (GlcNAc...) asparagine glycans are attached at residues N776, N803, N847, and N919. 2 disordered regions span residues 906-928 (STIP…PPSM) and 941-961 (FGKK…SEEN). N962, N982, N1020, N1024, N1074, N1085, N1204, N1274, N1278, N1301, N1319, N1431, and N1461 each carry an N-linked (GlcNAc...) asparagine glycan. Sulfotyrosine is present on residues Y1683 and Y1699. Plastocyanin-like domains follow at residues 1713–1877 (KTRH…LLVC) and 1887–2040 (GRQV…SNKC). One can recognise an F5/8 type A 3 domain in the interval 1713–2040 (KTRHYFIAAV…TLFLVYSNKC (328 aa)). N1829 carries N-linked (GlcNAc...) asparagine glycosylation. Disulfide bonds link C1851-C1877, C1918-C1922, C2040-C2188, and C2193-C2345. F5/8 type C domains lie at 2040–2188 (CQTP…LMGC) and 2193–2345 (CSMP…VLGC). N2137 carries N-linked (GlcNAc...) asparagine glycosylation.

The protein belongs to the multicopper oxidase family. Interacts with VWF/vWF. vWF binding is essential for the stabilization of F8 in circulation. In terms of processing, sulfation on Tyr-1699 is essential for binding vWF. Proteolytically cleaved by cathepsin CTSG to produce a partially activated form.

The protein localises to the secreted. It localises to the extracellular space. In terms of biological role, factor VIII, along with calcium and phospholipid, acts as a cofactor for F9/factor IXa when it converts F10/factor X to the activated form, factor Xa. The chain is Coagulation factor VIII (F8) from Homo sapiens (Human).